Consider the following 103-residue polypeptide: Small ribosomal subunit protein uS14c (103 aa).

The disordered stretch occupies residues 27–56 (SKKKIRSKVSPLSLSEKTKMQEKLQSLPRN).

This sequence belongs to the universal ribosomal protein uS14 family. In terms of assembly, part of the 30S ribosomal subunit.

The protein localises to the plastid. Its subcellular location is the chloroplast. Functionally, binds 16S rRNA, required for the assembly of 30S particles. In Zea mays (Maize), this protein is Small ribosomal subunit protein uS14c.